The following is an 856-amino-acid chain: MSLSPQGADMSGVLYLGRFTLCLLPVSCFSQKVMTCADTVRGAQEVFMLCIYVELPYYYQLTRIFPADIESLCARMRRFAVHNGAALHEASSVRIFAFEAHSLGSVYAAVRCVRALYQTLDTYEKQVKEFRILMDVVADDASPCLIEDRFHAYRSTLIPDRGFFASFRAKQLLKHYLEFLPLPALNMYQVNGFLSLCAEKPFPQGVTTHCIVVRTTSSYMSALCNFMALHPLSEAVYSTLSEETRAFFFHLRAAVSFFKRRRYDSSFPQYLTDAFLQYVGLYFKLYYEAAPNAAPPPIYVDPCAGHESQKQAEKVLIVSPHSPLMRLPASCADIEAIPQDLAEVMYTLSLASRYIFADEIEEFFLFLKKHADFVGDLFDKMFCTQVTMVPHNAYAIPEDVHDSLEKRVRVKMPVIRECISSFLWKKYQEGSLCASTDLLRTFQELQYKYTSDCVLHSLFHTYSDVQIAHLQVEEYTGTDVGAVLKVYQHTLLVGMREDAEAAFREAKACLTTLQARRFVSAEYRTFSLLGFLTIGQSKFEDALVYFGYALDDAEQLRDGDFLCSALFHLSITYFLQHNFTQARLFLSKLSDAISTYFEQRWKTVSLFMQGRISLSLGEYAQARRCFDEAADFALQYFEHQEPLCRVWAAHARLLADKSYAAHALFQDMCDQYPDAYLFLVESYVRAECFDDPTLFQSFPEETTSREPCVPSFSLDTPIYSGFSCAEDLVWGRQCAFAVSAQHSTVFAHYYHCRVHLHRAEDMQTFHHHKQKLEAIARRAFQIGDPSAALFLYLCYDVSYRVHGAEAAVTTAHLSRAFKVMQRSVAYMSENTVRAQFMQDNFWNAKLFAAAQANKLI.

TPR repeat units follow at residues 107–140 (YAAVRCVRALYQTLDTYEKQVKEFRILMDVVADD), 523–556 (YRTFSLLGFLTIGQSKFEDALVYFGYALDDAEQL), and 603–636 (TVSLFMQGRISLSLGEYAQARRCFDEAADFALQY).

This is TPR repeat-containing protein TP_0123 from Treponema pallidum (strain Nichols).